A 262-amino-acid chain; its full sequence is MEGRLLLLETPGNTRMSLAYDEAIYRSFQYGDKPILRFYRHDRSVIIGYFQVAEEEVDLDYMKKNGIMLARRYTGGGAVYHDLGDLNFSVVRSSDDMDITSMFRTMNEAVVNSLRILGLDARPGELNDVSIPVNKKTDIMAGEKKIMGAAGAMRKGAKLWHAAMLVHTDLDMLSAVLKVPDEKFRDKIAKSTRERVANVTDFVDVSIDEVRNALIRGFSETLHIDFREDTITEKEESLARELFDKKYSTEEWNMGLLRKEVV.

One can recognise a BPL/LPL catalytic domain in the interval 30-226 (YGDKPILRFY…GFSETLHIDF (197 aa)). ATP-binding residues include Arg72, Gly77, Tyr80, Asp85, Pro132, and Lys135. Positions 137 and 138 each coordinate Mg(2+). ATP-binding residues include Lys145, Ala149, and Ala163. Lys145 lines the (R)-lipoate pocket. Mg(2+) is bound at residue Ala149.

The protein belongs to the LplA family. As to quaternary structure, heterodimer composed of LplA and LplB.

The protein resides in the cytoplasm. The catalysed reaction is L-lysyl-[lipoyl-carrier protein] + (R)-lipoate + ATP = N(6)-[(R)-lipoyl]-L-lysyl-[lipoyl-carrier protein] + AMP + diphosphate + H(+). Its pathway is protein modification; protein lipoylation via exogenous pathway; protein N(6)-(lipoyl)lysine from lipoate: step 1/2. It functions in the pathway protein modification; protein lipoylation via exogenous pathway; protein N(6)-(lipoyl)lysine from lipoate: step 2/2. Functionally, part of a lipoate-protein ligase complex that catalyzes both the ATP-dependent activation of exogenously supplied lipoate to lipoyl-AMP and the transfer of the activated lipoyl onto the lipoyl domains of lipoate-dependent enzymes. Can also use octanoate as substrate. In Thermoplasma acidophilum (strain ATCC 25905 / DSM 1728 / JCM 9062 / NBRC 15155 / AMRC-C165), this protein is Lipoate-protein ligase A subunit 1 (lplA).